The chain runs to 1064 residues: MPMLIQKSEVEYQTISSTQSHLAEEQSERLHRCISKEQLEKLHEAFLNAPERQVGIDDLRVMLEDLDITFNDSMYTRLFLKINQNRDFRVDWNEFVSYLIFGFQEEDPSSQKESLILPISVPPMVRKSEHRSAICCLALLKAKSDQVPIEEVTETVNFSFGGEDSPEASGMWVTASHEGMMRFWTSHMEPIRTASSESIHLNYAFYNNGKVHSKLILGDYAGNVRILSYSPHLRGPFQAKPGAALIEVVWSDVLKGKIPQFVPKEYISLHNEMISCVYFSLHMNALFASAEYRNTKKYRGRCPGMIMVTYDERSNFRIPLGVSTFFVAESHNIVVTGGPDTFVRIWDVYIPTEPSAILTGHNGGIVLVFVQPEENKVYSVDYQKIIKVWDLQEHTLLQTYGDLVRLIHHSETDLTYYYHSHLRELVVAGRKLISIKCCPRVRVDLTDGNTHAAPVSVVLYNRLFRNIVTCGLDSYIIVWDPWTGRRKIIMKSCHTKMIYGEIIDIEITAACFDPLEQFLLTGARDGSLKIWNYNNAVVVRNMSIMPDQEVTSVIWVVDRILAMGWDRQVTEFNDVVGREYGDPKKWPKFHTDDITCADVKLGEGVVTATYSGEIIFWKLETGQPYRRYSVMDPTRFIELKLTAEEEKSLRRSKRLASRPTHTGIHGLQMSRAGRSTVTNRPEDNRDYGANIPISVQAVLFLQTRPQTLKHGSVFISLDTGYIQVYSHHQRGGYMMEFLAVHKTGDCVLTMCTDRKNRFLYTGTAFGYVKIWYIVNFCVPASEKTHVCMPKLRLEFIFLRKELFLTRAKRAIRNQPEPLLVSSYKGHLKAINSIAFINLPKIVFTGSHDYSCRLWTQGGRYLGTLGTVLPWSKLTPFERAGDDSQTYRMPPDIKKVASSTTLKVISGLQAERMVKRQEGKVTEDRDEDTAQTEDVTELKRLLDSPIKEPILGKHFELPGRTVLDQHIELDTSQSYIAVYTHLKVHSTEMLERLPTPAVIGKVQAENYLHHYVPVEGKVDISGSSLNIKQPTRRRSGKTHDPRNIRTAKARLDIGMGLSSSHASQQ.

WD repeat units follow at residues 150–194, 317–356, 360–399, 450–489, 502–541, 589–629, 742–781, and 825–864; these read EEVT…IRTA, RIPL…EPSA, GHNG…LLQT, THAA…RKII, IIDI…VVRN, FHTD…RRYS, KTGD…VPAS, and GHLK…LGTL. The segment at 1022 to 1044 is disordered; sequence SSLNIKQPTRRRSGKTHDPRNIR.

This is WD repeat-containing protein on Y chromosome from Drosophila ananassae (Fruit fly).